The sequence spans 332 residues: Glycerol-3-phosphate dehydrogenase [NAD(P)+] 2 (332 aa).

Residues Ser-17, Trp-18, Arg-37, and Lys-112 each coordinate NADPH. Positions 112 and 140 each coordinate sn-glycerol 3-phosphate. Position 144 (Ala-144) interacts with NADPH. Sn-glycerol 3-phosphate-binding residues include Lys-195, Asp-243, Ser-253, Arg-254, and Asn-255. Lys-195 (proton acceptor) is an active-site residue. Position 254 (Arg-254) interacts with NADPH. NADPH is bound by residues Val-278 and Glu-280.

The protein belongs to the NAD-dependent glycerol-3-phosphate dehydrogenase family.

Its subcellular location is the cytoplasm. The catalysed reaction is sn-glycerol 3-phosphate + NAD(+) = dihydroxyacetone phosphate + NADH + H(+). The enzyme catalyses sn-glycerol 3-phosphate + NADP(+) = dihydroxyacetone phosphate + NADPH + H(+). It participates in membrane lipid metabolism; glycerophospholipid metabolism. Functionally, catalyzes the reduction of the glycolytic intermediate dihydroxyacetone phosphate (DHAP) to sn-glycerol 3-phosphate (G3P), the key precursor for phospholipid synthesis. This is Glycerol-3-phosphate dehydrogenase [NAD(P)+] 2 from Mycolicibacterium paratuberculosis (strain ATCC BAA-968 / K-10) (Mycobacterium paratuberculosis).